Consider the following 120-residue polypeptide: Large ribosomal subunit protein P3 (120 aa).

The interval 83–120 (GGGGAAASGGAAAEAPKEEKKEEEKEESDDDMGFSLFD) is disordered.

It belongs to the eukaryotic ribosomal protein P1/P2 family. Phosphorylated.

In terms of biological role, plays an important role in the elongation step of protein synthesis. This chain is Large ribosomal subunit protein P3 (RPP3A), found in Zea mays (Maize).